Consider the following 496-residue polypeptide: Cytochrome P450 monooxygenase cle4 (496 aa).

Residues 12–34 (FFTSPFPLTVGILSISLSGVLWY) form a helical membrane-spanning segment. Cys-435 provides a ligand contact to heme.

This sequence belongs to the cytochrome P450 family. It depends on heme as a cofactor.

The protein localises to the membrane. It participates in secondary metabolite biosynthesis; terpenoid biosynthesis. Cytochrome P450 monooxygenase; part of the cluster A that mediates the biosynthesis of chevalone E and its oxidized derivatives that possess a unique five-membered lactone ring and can synergistically enhance the cytotoxicity of doxorubicin (DOX) in breast cancer cells. Within the pathway, cle4 is involved in hydroxylation of the chavalone E scaffold at positions C-11 and C-12 and contributes with cle2 to the production of seven oxidation derivatives. The molecular scaffold is commonly biosynthesized by a series of enzymes including the non-reducing polyketide synthase (NR-PKS) cle1 that produces the alpha-pyrone triacetic acid lactone (TAL); The membrane-bound prenyltransferase cle5 that accepts TAL as its substrate to perform a C-3 geranylgeranylation reaction, in which the pathway-dedicated GGPS cle6 is required to provide GGPP, the other substrate of cle5; the FAD-dependent monooxygenase Cle3 that forms an (S)-epoxide ring at the terminal olefin of the geranylgeranyl group; and the terpene cyclase Cle7 that catalyzes the cyclization of the prenyl group that yields the pentacyclic pathway intermediate chevalone E. Chevalone E can derivatize into seven new oxidized analogs by the cytochrome P450 monooxygenases cle2 (acting at C-20) and cle4 (acting at C-11 and C-12). This Aspergillus versicolor protein is Cytochrome P450 monooxygenase cle4.